A 470-amino-acid polypeptide reads, in one-letter code: 1-deoxy-D-xylulose 5-phosphate reductoisomerase, chloroplastic (470 aa).

7 residues coordinate NADPH: T83, G84, S85, I86, G109, N111, and N197. Residue K198 coordinates 1-deoxy-D-xylulose 5-phosphate. E199 is an NADPH binding site. A Mn(2+)-binding site is contributed by D223. The 1-deoxy-D-xylulose 5-phosphate site is built by S224, E225, S249, and H272. Residue E225 coordinates Mn(2+). G278 provides a ligand contact to NADPH. 1-deoxy-D-xylulose 5-phosphate is bound by residues S285, N290, K291, and E294. E294 is a Mn(2+) binding site.

Belongs to the DXR family. Mn(2+) is required as a cofactor. It depends on Mg(2+) as a cofactor.

Its subcellular location is the plastid. It localises to the chloroplast. The catalysed reaction is 2-C-methyl-D-erythritol 4-phosphate + NADP(+) = 1-deoxy-D-xylulose 5-phosphate + NADPH + H(+). Its pathway is isoprenoid biosynthesis; isopentenyl diphosphate biosynthesis via DXP pathway; isopentenyl diphosphate from 1-deoxy-D-xylulose 5-phosphate: step 1/6. In terms of biological role, catalyzes the NADPH-dependent rearrangement and reduction of 1-deoxy-D-xylulose-5-phosphate (DXP) to 2-C-methyl-D-erythritol 4-phosphate (MEP). The polypeptide is 1-deoxy-D-xylulose 5-phosphate reductoisomerase, chloroplastic (DXR) (Mentha piperita (Peppermint)).